A 203-amino-acid chain; its full sequence is Thymidylate kinase (203 aa).

10–17 (GVEGSGKT) lines the ATP pocket.

Belongs to the thymidylate kinase family.

The enzyme catalyses dTMP + ATP = dTDP + ADP. Its function is as follows. Phosphorylation of dTMP to form dTDP in both de novo and salvage pathways of dTTP synthesis. In Carboxydothermus hydrogenoformans (strain ATCC BAA-161 / DSM 6008 / Z-2901), this protein is Thymidylate kinase.